The primary structure comprises 585 residues: Neopullulanase 2 (585 aa).

N143, D145, N148, D149, G169, and D171 together coordinate Ca(2+). 2 residues coordinate substrate: H244 and R323. D325 (nucleophile) is an active-site residue. Catalysis depends on E354, which acts as the Proton donor. Residues 420–421 (HD), D465, and R469 each bind substrate.

This sequence belongs to the glycosyl hydrolase 13 family. As to quaternary structure, monomer. The cofactor is Ca(2+).

The catalysed reaction is Hydrolysis of pullulan to panose (6-alpha-D-glucosylmaltose).. Functionally, hydrolyzes pullulan efficiently but only a small amount of starch. Endohydrolysis of 1,4-alpha-glucosidic linkages in pullulan to form panose. Also cleaves (1-6)-alpha-glucosidic linkages to form maltotriose. The sequence is that of Neopullulanase 2 (tvaII) from Thermoactinomyces vulgaris.